The chain runs to 94 residues: ESAT-6-like protein EsxN (94 aa).

The protein belongs to the WXG100 family. ESAT-6 subfamily.

It is found in the secreted. This chain is ESAT-6-like protein EsxN, found in Mycobacterium bovis (strain ATCC BAA-935 / AF2122/97).